The following is a 310-amino-acid chain: Ribosomal RNA small subunit methyltransferase H (310 aa).

Residues 33–35 (AGH), Asp-53, Phe-79, Asp-100, and Gln-107 contribute to the S-adenosyl-L-methionine site.

It belongs to the methyltransferase superfamily. RsmH family.

It localises to the cytoplasm. The enzyme catalyses cytidine(1402) in 16S rRNA + S-adenosyl-L-methionine = N(4)-methylcytidine(1402) in 16S rRNA + S-adenosyl-L-homocysteine + H(+). Functionally, specifically methylates the N4 position of cytidine in position 1402 (C1402) of 16S rRNA. The sequence is that of Ribosomal RNA small subunit methyltransferase H from Clostridium botulinum (strain Alaska E43 / Type E3).